We begin with the raw amino-acid sequence, 351 residues long: Cytoplasmic dynein 2 light intermediate chain 1 (351 aa).

The segment at 304–351 (TLKDVKDPAKDPQYAESEVDEMRIQKDQELEQYKRSSSKSWKQIELDS) is disordered. Basic and acidic residues predominate over residues 323–337 (DEMRIQKDQELEQYK).

It belongs to the dynein light intermediate chain family. As to quaternary structure, light intermediate chain of the cytoplasmic dynein complex 2, a multisubunit complex composed at least of eleven different proteins. The cytoplasmic dynein 2 complex consists of two catalytic heavy chains (HCs) and a number of non-catalytic subunits presented by intermediate chains (ICs), light intermediate chains (LICs) and light chains (LCs). Among them, a heavy chain (DYNC2H1), two intermediate chains (DYNC2I2 and DYNC2I1), a light intermediate chain (DYNC2LI1), and a light chain (DYNLT2B) are unique to the dynein-2 complex, but a subset of light chains are also shared by dynein-1 and dynein-2 complexes. Dynein-2 complex is built around two copies of cytoplasmic dynein 2 heavy chain 1 (DYNC2H1). The C-terminal region forms the motor domain, which converts the energy from ATP hydrolysis into movement. Its N-terminal region forms the tail, an extended structure that binds the other subunits and holds the two heavy chains in a homodimer. Interacts with DYNC2H1 (via N-terminus); this interaction stabilizes the dynein-2 complex structure.

Its subcellular location is the cytoplasm. It localises to the cell projection. The protein resides in the cilium. It is found in the cytoskeleton. The protein localises to the cilium basal body. Its subcellular location is the cilium axoneme. It localises to the microtubule organizing center. The protein resides in the centrosome. Functionally, acts as one of several non-catalytic accessory components of the cytoplasmic dynein 2 complex (dynein-2 complex), a motor protein complex that drives the movement of cargos along microtubules within cilia and flagella in concert with the intraflagellar transport (IFT) system, facilitating the assembly of these organelles. Involved in the regulation of ciliary length. The polypeptide is Cytoplasmic dynein 2 light intermediate chain 1 (DYNC2LI1) (Bos taurus (Bovine)).